Here is a 309-residue protein sequence, read N- to C-terminus: Taste receptor type 2 member 31 (309 aa).

Residues 1–2 (MT) are Extracellular-facing. The helical transmembrane segment at 3–23 (TFLPIIFSSLVVVIFVIGNFA) threads the bilayer. Topologically, residues 24-55 (NGFIALVNSIEWFKXQKISFADQILTALAVSR) are cytoplasmic. The chain crosses the membrane as a helical span at residues 56–76 (VGLLWVLLLNWYSTVLNPAFY). The Extracellular portion of the chain corresponds to 77-100 (SVEVRTTAYNVWAVTGHFSNWLAT). The helical transmembrane segment at 101-121 (SLSIFYLLKIANFSNFIFLHL) threads the bilayer. Residues 122 to 126 (KRRVK) lie on the Cytoplasmic side of the membrane. Residues 127-147 (SVILVMLLGPLLFLACQLFMI) form a helical membrane-spanning segment. The Extracellular portion of the chain corresponds to 148-181 (NMKEIVRTKEYEGNMTWKIKLRSAVYLSDATVTT). Asn161 is a glycosylation site (N-linked (GlcNAc...) asparagine). Residues 182-202 (LGNLVPFTLTLLCFLLLICSL) form a helical membrane-spanning segment. At 203–229 (CKHLKKMQLHGKGSQDPSTKVHIKVLQ) the chain is on the cytoplasmic side. A helical transmembrane segment spans residues 230 to 250 (TVISFLLLCAIYFLSIMISVW). Topologically, residues 251 to 259 (SFGSLKNKP) are extracellular. Residues 260-280 (VFMFCKAIRFSYPSIHPFILI) traverse the membrane as a helical segment. The Cytoplasmic segment spans residues 281 to 309 (WGNKKLKQTFLSVLRQVRYWVKGEKPSSP).

It belongs to the G-protein coupled receptor T2R family.

It localises to the membrane. Functionally, receptor that may play a role in the perception of bitterness and is gustducin-linked. May play a role in sensing the chemical composition of the gastrointestinal content. The activity of this receptor may stimulate alpha gustducin, mediate PLC-beta-2 activation and lead to the gating of TRPM5. This is Taste receptor type 2 member 31 (TAS2R31) from Pan paniscus (Pygmy chimpanzee).